The sequence spans 422 residues: UDP-N-acetylglucosamine 1-carboxyvinyltransferase (422 aa).

Residue 22-23 coordinates phosphoenolpyruvate; that stretch reads KN. Residue Arg-94 coordinates UDP-N-acetyl-alpha-D-glucosamine. Residue Cys-118 is the Proton donor of the active site. A 2-(S-cysteinyl)pyruvic acid O-phosphothioketal modification is found at Cys-118. UDP-N-acetyl-alpha-D-glucosamine-binding positions include 123–127, Asp-309, and Ile-331; that span reads RPVDL.

It belongs to the EPSP synthase family. MurA subfamily.

The protein localises to the cytoplasm. The enzyme catalyses phosphoenolpyruvate + UDP-N-acetyl-alpha-D-glucosamine = UDP-N-acetyl-3-O-(1-carboxyvinyl)-alpha-D-glucosamine + phosphate. It participates in cell wall biogenesis; peptidoglycan biosynthesis. Cell wall formation. Adds enolpyruvyl to UDP-N-acetylglucosamine. The protein is UDP-N-acetylglucosamine 1-carboxyvinyltransferase of Cereibacter sphaeroides (strain ATCC 17023 / DSM 158 / JCM 6121 / CCUG 31486 / LMG 2827 / NBRC 12203 / NCIMB 8253 / ATH 2.4.1.) (Rhodobacter sphaeroides).